A 382-amino-acid polypeptide reads, in one-letter code: Queuine tRNA-ribosyltransferase (382 aa).

Aspartate 93 acts as the Proton acceptor in catalysis. Residues 93–97 (DSGGF), aspartate 147, glutamine 191, and glycine 218 each bind substrate. The tract at residues 249 to 255 (GVGKPED) is RNA binding. Aspartate 268 functions as the Nucleophile in the catalytic mechanism. Positions 273-277 (TRNAR) are RNA binding; important for wobble base 34 recognition. Residues cysteine 306, cysteine 308, cysteine 311, and histidine 337 each coordinate Zn(2+).

Belongs to the queuine tRNA-ribosyltransferase family. Homodimer. Within each dimer, one monomer is responsible for RNA recognition and catalysis, while the other monomer binds to the replacement base PreQ1. Zn(2+) serves as cofactor.

It catalyses the reaction 7-aminomethyl-7-carbaguanine + guanosine(34) in tRNA = 7-aminomethyl-7-carbaguanosine(34) in tRNA + guanine. The protein operates within tRNA modification; tRNA-queuosine biosynthesis. Its function is as follows. Catalyzes the base-exchange of a guanine (G) residue with the queuine precursor 7-aminomethyl-7-deazaguanine (PreQ1) at position 34 (anticodon wobble position) in tRNAs with GU(N) anticodons (tRNA-Asp, -Asn, -His and -Tyr). Catalysis occurs through a double-displacement mechanism. The nucleophile active site attacks the C1' of nucleotide 34 to detach the guanine base from the RNA, forming a covalent enzyme-RNA intermediate. The proton acceptor active site deprotonates the incoming PreQ1, allowing a nucleophilic attack on the C1' of the ribose to form the product. After dissociation, two additional enzymatic reactions on the tRNA convert PreQ1 to queuine (Q), resulting in the hypermodified nucleoside queuosine (7-(((4,5-cis-dihydroxy-2-cyclopenten-1-yl)amino)methyl)-7-deazaguanosine). The polypeptide is Queuine tRNA-ribosyltransferase (Haemophilus influenzae (strain PittEE)).